The following is a 156-amino-acid chain: CRIB domain-containing protein RIC10 (156 aa).

Residues 30–43 form the CRIB domain; that stretch reads IGFPTDVKHVAHIG. The span at 68 to 77 shows a compositional bias: polar residues; that stretch reads RPSSFSNARP. The interval 68–156 is disordered; that stretch reads RPSSFSNARP…SYKSTVSRLI (89 aa). Residues 78 to 96 show a composition bias toward low complexity; it reads STSFFTSSSSTDFDQGSSQ. A compositionally biased stretch (basic residues) spans 117–128; it reads NNKKKSSRRKKS. Positions 129–156 are enriched in low complexity; sequence SSSSSSPKSSRSSVLSKSSYKSTVSRLI.

As to expression, expressed in roots, leaves, flowers and pollen.

It localises to the cytoplasm. In terms of biological role, functions as a downstream effector of Rho-related GTP binding proteins of the 'Rho of Plants' (ROPs) family. Participates in the propagation of ROP GTPase signals in specific cellular responses. Is involved in pollen tube growth regulation. In Arabidopsis thaliana (Mouse-ear cress), this protein is CRIB domain-containing protein RIC10 (RIC10).